We begin with the raw amino-acid sequence, 878 residues long: Leucine--tRNA ligase (878 aa).

A 'HIGH' region motif is present at residues 43 to 54 (PYPSAQGLHVGH). Positions 634–638 (KMSKA) match the 'KMSKS' region motif. Lys637 is a binding site for ATP.

The protein belongs to the class-I aminoacyl-tRNA synthetase family.

It localises to the cytoplasm. The enzyme catalyses tRNA(Leu) + L-leucine + ATP = L-leucyl-tRNA(Leu) + AMP + diphosphate. This Treponema pallidum subsp. pallidum (strain SS14) protein is Leucine--tRNA ligase.